We begin with the raw amino-acid sequence, 124 residues long: Large ribosomal subunit protein bL12 (124 aa).

It belongs to the bacterial ribosomal protein bL12 family. In terms of assembly, homodimer. Part of the ribosomal stalk of the 50S ribosomal subunit. Forms a multimeric L10(L12)X complex, where L10 forms an elongated spine to which 2 to 4 L12 dimers bind in a sequential fashion. Binds GTP-bound translation factors.

Its function is as follows. Forms part of the ribosomal stalk which helps the ribosome interact with GTP-bound translation factors. Is thus essential for accurate translation. This Hamiltonella defensa subsp. Acyrthosiphon pisum (strain 5AT) protein is Large ribosomal subunit protein bL12.